The chain runs to 113 residues: Urease subunit beta (113 aa).

Belongs to the urease beta subunit family. As to quaternary structure, heterotrimer of UreA (gamma), UreB (beta) and UreC (alpha) subunits. Three heterotrimers associate to form the active enzyme.

Its subcellular location is the cytoplasm. The enzyme catalyses urea + 2 H2O + H(+) = hydrogencarbonate + 2 NH4(+). Its pathway is nitrogen metabolism; urea degradation; CO(2) and NH(3) from urea (urease route): step 1/1. This chain is Urease subunit beta, found in Nitrosospira multiformis (strain ATCC 25196 / NCIMB 11849 / C 71).